We begin with the raw amino-acid sequence, 277 residues long: Secoisolariciresinol dehydrogenase (277 aa).

Residues 24–29 (GGASGI), Asp-48, Val-73, and Asn-99 each bind NAD(+). Ser-163 is a binding site for substrate. The active-site Proton donor/acceptor is the Tyr-166. Lys-170 is a binding site for NAD(+).

Belongs to the short-chain dehydrogenases/reductases (SDR) family. As to quaternary structure, homotetramer.

It carries out the reaction (-)-secoisolariciresinol + 2 NAD(+) = (-)-matairesinol + 2 NADH + 2 H(+). In terms of biological role, oxidoreductase involved in lignan biosynthesis. Catalyzes the stereospecific conversion of (-)-secoisolariciresinol to (-)-matairesinol via a lactol intermediate. In Forsythia intermedia (Border forsythia), this protein is Secoisolariciresinol dehydrogenase.